Consider the following 902-residue polypeptide: Tiger protein B1 (902 aa).

Residues 1–24 (MKVIYIYLLLLLVCKFLFVKSSCS) form the signal peptide. The Extracellular portion of the chain corresponds to 25-803 (LKVGKIECTK…IIYSENKSTG (779 aa)). 19 N-linked (GlcNAc...) asparagine glycosylation sites follow: N43, N144, N184, N223, N272, N279, N288, N358, N389, N398, N437, N559, N628, N644, N706, N753, N764, N771, and N799. In terms of domain architecture, IPT/TIG 1 spans 249-323 (MEGVLNDNGG…ITIDGEYKSN (75 aa)). 2 IPT/TIG domains span residues 603 to 680 (PIIE…ISSS) and 704 to 788 (ITNT…IFQF). Residues 804–824 (FPNEMYLGFVVFVIFIALISF) traverse the membrane as a helical segment. The Cytoplasmic portion of the chain corresponds to 825 to 902 (AAKNQIEKYF…IRRCFKEHTD (78 aa)).

Its subcellular location is the cell membrane. TgrB1 and tgrC1 are involved in kin discrimination. They play an essential role in aggregation and subsequent development. The polypeptide is Tiger protein B1 (tgrB1) (Dictyostelium discoideum (Social amoeba)).